We begin with the raw amino-acid sequence, 352 residues long: C-C chemokine receptor type 5 (352 aa).

Topologically, residues 1–30 (MDYQVSSPTYDIDYYTSEPCQKVNVKQIAA) are extracellular. Tyr-3 bears the Sulfotyrosine mark. Ser-6 and Ser-7 each carry an O-linked (GalNAc...) serine glycan. A sulfotyrosine mark is found at Tyr-10, Tyr-14, and Tyr-15. Intrachain disulfides connect Cys-20–Cys-269 and Cys-101–Cys-178. A helical transmembrane segment spans residues 31–58 (RLLPPLYSLVFIFGFVGNILVVLILINC). The Cytoplasmic portion of the chain corresponds to 59–68 (KRLKSMTDIY). Residues 69–89 (LLNLAISDLFFLLTVPFWAHY) traverse the membrane as a helical segment. Residues 90-102 (AAAQWDFGNTMCQ) are Extracellular-facing. Residues 103 to 124 (LLTGLYFIGFFSGIFFIILLTI) traverse the membrane as a helical segment. Over 125–141 (DRYLAIVHAVFALKART) the chain is Cytoplasmic. The chain crosses the membrane as a helical span at residues 142-166 (VTFGVVTSVITWVVAVFASLPGIIF). The Extracellular portion of the chain corresponds to 167–198 (TRSQREGLHYTCSSHFPYSQYQFWKNFQTLKI). A helical transmembrane segment spans residues 199-218 (VILGLVLPLLVMVICYSGIL). Residues 219-235 (KTLLRCRSEKKRHRAVR) lie on the Cytoplasmic side of the membrane. A helical membrane pass occupies residues 236-260 (LIFTIMIVYFLFWAPYNIVLLLNTF). Residues 261–277 (QEFFGLNNCSSSNRLDQ) are Extracellular-facing. Residues 278–301 (AMQVTETLGMTHCCINPIIYAFVG) traverse the membrane as a helical segment. At 302–352 (EKFRNYLLVFFQKHIAKHFCKCCSIFQQEAPERASSVYTRSTGEQEISVGL) the chain is on the cytoplasmic side. S-palmitoyl cysteine attachment occurs at residues Cys-321, Cys-323, and Cys-324. Ser-336, Ser-337, Ser-342, and Ser-349 each carry phosphoserine; by BARK1.

Belongs to the G-protein coupled receptor 1 family. Interacts with PRAF2. Efficient ligand binding to CCL3/MIP-1alpha and CCL4/MIP-1beta requires sulfation, O-glycosylation and sialic acid modifications. Glycosylation on Ser-6 is required for efficient binding of CCL4. Interacts with GRK2. Interacts with ARRB1 and ARRB2. Interacts with CNIH4. Interacts with S100A4; this interaction stimulates T-lymphocyte chemotaxis. Sulfated on at least 2 of the N-terminal tyrosines. Sulfation is required for efficient binding of the chemokines, CCL3 and CCL4. Post-translationally, palmitoylation in the C-terminal is important for cell surface expression. In terms of processing, phosphorylation on serine residues in the C-terminal is stimulated by binding CC chemokines especially by APO-RANTES. O-glycosylated, but not N-glycosylated. Ser-6 appears to be the major site even if Ser-7 may be also O-glycosylated. Also sialylated glycans present which contribute to chemokine binding. Thr-16 and Ser-17 may also be glycosylated and, if so, with small moieties such as a T-antigen.

The protein localises to the cell membrane. Receptor for a number of inflammatory CC-chemokines including CCL3/MIP-1-alpha, CCL4/MIP-1-beta and RANTES and subsequently transduces a signal by increasing the intracellular calcium ion level. May play a role in the control of granulocytic lineage proliferation or differentiation. Participates in T-lymphocyte migration to the infection site by acting as a chemotactic receptor. This chain is C-C chemokine receptor type 5 (CCR5), found in Trachypithecus johnii (Nilgiri langur).